Consider the following 143-residue polypeptide: Photosystem I reaction center subunit IV B, chloroplastic (143 aa).

A chloroplast-targeting transit peptide spans Met-1 to Arg-51. Residues Ala-56–Ala-75 show a composition bias toward low complexity. Positions Ala-56–Thr-86 are disordered.

It belongs to the PsaE family. Post-translationally, 2 isoforms exists (ratio 1:1). With or without the N-terminal alanine.

The protein resides in the plastid. It localises to the chloroplast thylakoid membrane. In terms of biological role, stabilizes the interaction between PsaC and the PSI core, assists the docking of the ferredoxin to PSI and interacts with ferredoxin-NADP oxidoreductase. This is Photosystem I reaction center subunit IV B, chloroplastic (PSAEB) from Nicotiana sylvestris (Wood tobacco).